The sequence spans 437 residues: tRNA(Ile2) 2-agmatinylcytidine synthetase TiaS (437 aa).

Belongs to the TiaS family.

The protein localises to the cytoplasm. It catalyses the reaction cytidine(34) in tRNA(Ile2) + agmatine + ATP + H2O = 2-agmatinylcytidine(34) in tRNA(Ile2) + AMP + 2 phosphate + 2 H(+). Functionally, ATP-dependent agmatine transferase that catalyzes the formation of 2-agmatinylcytidine (agm2C) at the wobble position (C34) of tRNA(Ile2), converting the codon specificity from AUG to AUA. The protein is tRNA(Ile2) 2-agmatinylcytidine synthetase TiaS of Thermoplasma volcanium (strain ATCC 51530 / DSM 4299 / JCM 9571 / NBRC 15438 / GSS1).